We begin with the raw amino-acid sequence, 95 residues long: Co-chaperonin GroES (95 aa).

It belongs to the GroES chaperonin family. In terms of assembly, heptamer of 7 subunits arranged in a ring. Interacts with the chaperonin GroEL.

It is found in the cytoplasm. Together with the chaperonin GroEL, plays an essential role in assisting protein folding. The GroEL-GroES system forms a nano-cage that allows encapsulation of the non-native substrate proteins and provides a physical environment optimized to promote and accelerate protein folding. GroES binds to the apical surface of the GroEL ring, thereby capping the opening of the GroEL channel. In Cereibacter sphaeroides (strain ATCC 17025 / ATH 2.4.3) (Rhodobacter sphaeroides), this protein is Co-chaperonin GroES.